Consider the following 152-residue polypeptide: Putative RRN3-like protein RRN3P1 (152 aa).

Belongs to the RRN3 family.

This Homo sapiens (Human) protein is Putative RRN3-like protein RRN3P1 (RRN3P1).